The chain runs to 274 residues: NH(3)-dependent NAD(+) synthetase (274 aa).

46–53 (GISGGQDS) provides a ligand contact to ATP. Aspartate 52 provides a ligand contact to Mg(2+). Arginine 140 contacts deamido-NAD(+). Threonine 160 serves as a coordination point for ATP. Glutamate 165 provides a ligand contact to Mg(2+). The deamido-NAD(+) site is built by lysine 173 and aspartate 180. ATP is bound by residues lysine 189 and threonine 211. 260-261 (HK) contacts deamido-NAD(+).

This sequence belongs to the NAD synthetase family. Homodimer.

It carries out the reaction deamido-NAD(+) + NH4(+) + ATP = AMP + diphosphate + NAD(+) + H(+). It participates in cofactor biosynthesis; NAD(+) biosynthesis; NAD(+) from deamido-NAD(+) (ammonia route): step 1/1. Its function is as follows. Catalyzes the ATP-dependent amidation of deamido-NAD to form NAD. Uses ammonia as a nitrogen source. This is NH(3)-dependent NAD(+) synthetase from Lactococcus lactis subsp. cremoris (strain SK11).